Consider the following 272-residue polypeptide: Energy-coupling factor transporter ATP-binding protein EcfA1 (272 aa).

Residues 2–237 (IKVSDVCFSY…KNIIEKAKID (236 aa)) enclose the ABC transporter domain. Residue 37 to 44 (GHNGSGKS) participates in ATP binding.

This sequence belongs to the ABC transporter superfamily. Energy-coupling factor EcfA family. In terms of assembly, forms a stable energy-coupling factor (ECF) transporter complex composed of 2 membrane-embedded substrate-binding proteins (S component), 2 ATP-binding proteins (A component) and 2 transmembrane proteins (T component).

It localises to the cell membrane. In terms of biological role, ATP-binding (A) component of a common energy-coupling factor (ECF) ABC-transporter complex. Unlike classic ABC transporters this ECF transporter provides the energy necessary to transport a number of different substrates. This is Energy-coupling factor transporter ATP-binding protein EcfA1 from Mesomycoplasma hyopneumoniae (strain 7448) (Mycoplasma hyopneumoniae).